Here is a 222-residue protein sequence, read N- to C-terminus: Global nitrogen regulator (222 aa).

An a nucleoside 3',5'-cyclic phosphate-binding site is contributed by 6-128; sequence NSLLTMFREL…NVMLQGLSSR (123 aa). Positions 142 to 215 constitute an HTH crp-type domain; the sequence is RDMGSRLVSF…KKRITVFNPV (74 aa). The segment at residues 175–194 is a DNA-binding region (H-T-H motif); that stretch reads HQAIAEAIGSTRVTVTRLLG.

Its function is as follows. Required for full expression of proteins subject to ammonium repression. Transcriptional activator of genes subject to nitrogen control. The sequence is that of Global nitrogen regulator (ntcA) from Synechococcus elongatus (strain ATCC 33912 / PCC 7942 / FACHB-805) (Anacystis nidulans R2).